Consider the following 253-residue polypeptide: 5'-nucleotidase SurE (253 aa).

A divalent metal cation is bound by residues Asp8, Asp9, Ser40, and Asn97.

This sequence belongs to the SurE nucleotidase family. It depends on a divalent metal cation as a cofactor.

Its subcellular location is the cytoplasm. It carries out the reaction a ribonucleoside 5'-phosphate + H2O = a ribonucleoside + phosphate. In terms of biological role, nucleotidase that shows phosphatase activity on nucleoside 5'-monophosphates. The sequence is that of 5'-nucleotidase SurE from Desulforamulus reducens (strain ATCC BAA-1160 / DSM 100696 / MI-1) (Desulfotomaculum reducens).